Consider the following 689-residue polypeptide: DNA ligase (689 aa).

Residues 40-44 (DSEYD), 89-90 (SL), and Glu121 contribute to the NAD(+) site. Residue Lys123 is the N6-AMP-lysine intermediate of the active site. Residues Arg144, Glu179, Lys295, and Lys319 each coordinate NAD(+). Zn(2+) contacts are provided by Cys413, Cys416, Cys431, and Cys437. The 80-residue stretch at 610–689 (REQSSLTDKI…EEWLTLIKNV (80 aa)) folds into the BRCT domain.

The protein belongs to the NAD-dependent DNA ligase family. LigA subfamily. The cofactor is Mg(2+). Mn(2+) serves as cofactor.

The catalysed reaction is NAD(+) + (deoxyribonucleotide)n-3'-hydroxyl + 5'-phospho-(deoxyribonucleotide)m = (deoxyribonucleotide)n+m + AMP + beta-nicotinamide D-nucleotide.. Functionally, DNA ligase that catalyzes the formation of phosphodiester linkages between 5'-phosphoryl and 3'-hydroxyl groups in double-stranded DNA using NAD as a coenzyme and as the energy source for the reaction. It is essential for DNA replication and repair of damaged DNA. The polypeptide is DNA ligase (Rickettsia rickettsii (strain Iowa)).